Reading from the N-terminus, the 464-residue chain is tRNA modification GTPase MnmE (464 aa).

3 residues coordinate (6S)-5-formyl-5,6,7,8-tetrahydrofolate: arginine 27, glutamate 90, and lysine 129. The 163-residue stretch at 222-384 (GVALVLAGSV…LYDKIRALIS (163 aa)) folds into the TrmE-type G domain. Residues 232–237 (NAGKSS), 251–257 (SSYPGTT), and 276–279 (DTAG) contribute to the GTP site. Residues serine 236 and threonine 257 each contribute to the Mg(2+) site. Residue lysine 464 coordinates (6S)-5-formyl-5,6,7,8-tetrahydrofolate.

The protein belongs to the TRAFAC class TrmE-Era-EngA-EngB-Septin-like GTPase superfamily. TrmE GTPase family. Homodimer. Heterotetramer of two MnmE and two MnmG subunits. K(+) serves as cofactor.

It is found in the cytoplasm. In terms of biological role, exhibits a very high intrinsic GTPase hydrolysis rate. Involved in the addition of a carboxymethylaminomethyl (cmnm) group at the wobble position (U34) of certain tRNAs, forming tRNA-cmnm(5)s(2)U34. The protein is tRNA modification GTPase MnmE of Borreliella burgdorferi (strain ATCC 35210 / DSM 4680 / CIP 102532 / B31) (Borrelia burgdorferi).